The sequence spans 142 residues: Hemoglobin subunit alpha (142 aa).

The Globin domain maps to 2–142; it reads VLSPADKSNV…VSTVLTSKYR (141 aa). S4 carries the post-translational modification Phosphoserine. An N6-succinyllysine mark is found at K8 and K12. At K17 the chain carries N6-acetyllysine; alternate. K17 is subject to N6-succinyllysine; alternate. A Phosphotyrosine modification is found at Y25. S36 is subject to Phosphoserine. K41 carries the post-translational modification N6-succinyllysine. S50 carries the phosphoserine modification. Residue H59 participates in O2 binding. H88 provides a ligand contact to heme b. S103 carries the post-translational modification Phosphoserine. A Phosphothreonine modification is found at T109. S125 carries the phosphoserine modification. T135 and T138 each carry phosphothreonine. The residue at position 139 (S139) is a Phosphoserine.

This sequence belongs to the globin family. As to quaternary structure, heterotetramer of two alpha chains and two beta chains. In terms of tissue distribution, red blood cells.

Its function is as follows. Involved in oxygen transport from the lung to the various peripheral tissues. In terms of biological role, hemopressin acts as an antagonist peptide of the cannabinoid receptor CNR1. Hemopressin-binding efficiently blocks cannabinoid receptor CNR1 and subsequent signaling. The polypeptide is Hemoglobin subunit alpha (HBA) (Ursus maritimus (Polar bear)).